A 190-amino-acid polypeptide reads, in one-letter code: NADH dehydrogenase [ubiquinone] iron-sulfur protein 3 (190 aa).

This sequence belongs to the complex I 30 kDa subunit family. In terms of assembly, complex I is composed of about 45 different subunits. This is a component of the iron-sulfur (IP) fragment of the enzyme.

The protein resides in the mitochondrion inner membrane. It catalyses the reaction a ubiquinone + NADH + 5 H(+)(in) = a ubiquinol + NAD(+) + 4 H(+)(out). Its function is as follows. Core subunit of the mitochondrial membrane respiratory chain NADH dehydrogenase (Complex I) that is believed to belong to the minimal assembly required for catalysis. Complex I functions in the transfer of electrons from NADH to the respiratory chain. The immediate electron acceptor for the enzyme is believed to be ubiquinone. This is NADH dehydrogenase [ubiquinone] iron-sulfur protein 3 (NAD9) from Oryza sativa subsp. japonica (Rice).